The primary structure comprises 708 residues: Fatty acid oxidation complex subunit alpha (708 aa).

The interval methionine 1–proline 190 is enoyl-CoA hydratase. Residues glutamine 310–serine 708 form a 3-hydroxyacyl-CoA dehydrogenase region.

This sequence in the N-terminal section; belongs to the enoyl-CoA hydratase/isomerase family. The protein in the central section; belongs to the 3-hydroxyacyl-CoA dehydrogenase family. Heterotetramer of two alpha chains (FadJ) and two beta chains (FadI).

Its subcellular location is the cytoplasm. The catalysed reaction is a (3S)-3-hydroxyacyl-CoA = a (2E)-enoyl-CoA + H2O. It catalyses the reaction a 4-saturated-(3S)-3-hydroxyacyl-CoA = a (3E)-enoyl-CoA + H2O. The enzyme catalyses a (3S)-3-hydroxyacyl-CoA + NAD(+) = a 3-oxoacyl-CoA + NADH + H(+). It carries out the reaction (3S)-3-hydroxybutanoyl-CoA = (3R)-3-hydroxybutanoyl-CoA. Its pathway is lipid metabolism; fatty acid beta-oxidation. In terms of biological role, catalyzes the formation of a hydroxyacyl-CoA by addition of water on enoyl-CoA. Also exhibits 3-hydroxyacyl-CoA epimerase and 3-hydroxyacyl-CoA dehydrogenase activities. This Shewanella halifaxensis (strain HAW-EB4) protein is Fatty acid oxidation complex subunit alpha.